Reading from the N-terminus, the 1030-residue chain is Beta-galactosidase (1030 aa).

Substrate contacts are provided by Asn99 and Asp197. Position 197 (Asp197) interacts with Na(+). Glu411, His413, and Glu456 together coordinate Mg(2+). Residues Glu456 and 532–535 each bind substrate; that span reads EYAH. The active-site Proton donor is Glu456. Glu532 acts as the Nucleophile in catalysis. Residue Asn592 participates in Mg(2+) binding. Na(+) is bound by residues Phe596 and Asn599. The substrate site is built by Asn599 and Trp1004.

The protein belongs to the glycosyl hydrolase 2 family. Homotetramer. Requires Mg(2+) as cofactor. Na(+) is required as a cofactor.

It catalyses the reaction Hydrolysis of terminal non-reducing beta-D-galactose residues in beta-D-galactosides.. The polypeptide is Beta-galactosidase (Photobacterium profundum (strain SS9)).